The sequence spans 156 residues: Ribosomal RNA large subunit methyltransferase H (156 aa).

S-adenosyl-L-methionine is bound by residues L73, G104, and 123–128; that span reads ISSMTL.

The protein belongs to the RNA methyltransferase RlmH family. Homodimer.

It is found in the cytoplasm. It catalyses the reaction pseudouridine(1915) in 23S rRNA + S-adenosyl-L-methionine = N(3)-methylpseudouridine(1915) in 23S rRNA + S-adenosyl-L-homocysteine + H(+). Specifically methylates the pseudouridine at position 1915 (m3Psi1915) in 23S rRNA. This is Ribosomal RNA large subunit methyltransferase H from Burkholderia cenocepacia (strain ATCC BAA-245 / DSM 16553 / LMG 16656 / NCTC 13227 / J2315 / CF5610) (Burkholderia cepacia (strain J2315)).